The sequence spans 223 residues: Dephospho-CoA kinase (223 aa).

Positions 3-204 (VFGLSGGAGS…AGRHRFRVAR (202 aa)) constitute a DPCK domain. 11-16 (GSGKST) serves as a coordination point for ATP.

This sequence belongs to the CoaE family.

The protein resides in the cytoplasm. The catalysed reaction is 3'-dephospho-CoA + ATP = ADP + CoA + H(+). It participates in cofactor biosynthesis; coenzyme A biosynthesis; CoA from (R)-pantothenate: step 5/5. Catalyzes the phosphorylation of the 3'-hydroxyl group of dephosphocoenzyme A to form coenzyme A. The protein is Dephospho-CoA kinase of Anaplasma marginale (strain St. Maries).